The chain runs to 129 residues: Basic blue protein (129 aa).

Residues 1–33 (MAKGRGSASWSARAIVTLMAVSVLLLQADYVQA) form the signal peptide. Positions 34-129 (ATYTVGDSGI…SDMKIAVTAV (96 aa)) constitute a Phytocyanin domain. Residues His72, Cys112, His117, and Met122 each coordinate Cu cation. An intrachain disulfide couples Cys85 to Cys118.

Expressed in the inflorescence and in the transmitting tract of the pistil. Detected in roots, stems, cauline leaves, cotyledons, hypocotyls, guard cells, pistils, sepals, stamen filaments and vascular bundles of roots but not of leaves. Not expressed in petals, anthers or pollen.

Its subcellular location is the secreted. The protein resides in the extracellular space. It is found in the extracellular matrix. In terms of biological role, forms a concentration gradient along the pollen tube growth path, with a lower level in the stigma papilla cell wall and a higher level in the transmitting tract extracellular matix of the style. The protein is Basic blue protein (ARPN) of Arabidopsis thaliana (Mouse-ear cress).